Here is a 757-residue protein sequence, read N- to C-terminus: Xylosyl- and glucuronyltransferase LARGE1 (757 aa).

Over M1–K10 the chain is Cytoplasmic. Residues F11 to S31 form a helical; Signal-anchor for type II membrane protein membrane-spanning segment. Over A32–S757 the chain is Lumenal. The stretch at A50 to T82 forms a coiled coil. A disordered region spans residues R76–C127. Residues T82 to H97 show a composition bias toward low complexity. Residues N123 and N149 are each glycosylated (N-linked (GlcNAc...) asparagine). The segment at I139–R414 is xylosyltransferase activity. Residues D243 and D245 each coordinate Mn(2+). Residue N273 is glycosylated (N-linked (GlcNAc...) asparagine). The tract at residues R415–S757 is glucuronyltransferase activity. Mn(2+) contacts are provided by D564 and D566. N738 carries N-linked (GlcNAc...) asparagine glycosylation.

The protein in the C-terminal section; belongs to the glycosyltransferase 49 family. It in the N-terminal section; belongs to the glycosyltransferase 8 family. Mn(2+) is required as a cofactor.

The protein resides in the golgi apparatus membrane. It carries out the reaction 3-O-[beta-D-GlcA-(1-&gt;3)-beta-D-Xyl-(1-&gt;4)-Rib-ol-P-Rib-ol-P-3-beta-D-GalNAc-(1-&gt;3)-beta-D-GlcNAc-(1-&gt;4)-(O-6-P-alpha-D-Man)]-Thr-[protein] + UDP-alpha-D-xylose = 3-O-[alpha-D-Xyl-(1-&gt;3)-beta-D-GlcA-(1-&gt;4)-beta-D-Xyl-(1-&gt;4)-Rib-ol-P-Rib-ol-P-3-beta-D-GalNAc-(1-&gt;3)-beta-D-GlcNAc-(1-&gt;4)-(O-6-P-alpha-D-Man)]-Thr-[protein] + UDP + H(+). The catalysed reaction is 3-O-{(1-&gt;[3)-alpha-D-Xyl-(1-&gt;3)-beta-D-GlcA-(1-&gt;](n)-4)-beta-D-Xyl-(1-&gt;4)-Rib-ol-P-Rib-ol-P-3-beta-D-GalNAc-(1-&gt;3)-beta-D-GlcNAc-(1-&gt;4)-O-6-P-alpha-D-Man}-L-Thr-[protein] + UDP-alpha-D-glucuronate = 3-O-{beta-D-GlcA-(1-&gt;[3)-alpha-D-Xyl-(1-&gt;3)-beta-D-GlcA-(1-&gt;](n)-4)-beta-D-Xyl-(1-&gt;4)-Rib-ol-P-Rib-ol-P-3-beta-D-GalNAc-(1-&gt;3)-beta-D-GlcNAc-(1-&gt;4)-O-6-P-alpha-D-Man}-L-Thr-[protein] + UDP + H(+). It catalyses the reaction 3-O-{beta-D-GlcA-(1-&gt;[3)-alpha-D-Xyl-(1-&gt;3)-beta-D-GlcA-(1-&gt;](n)-4)-beta-D-Xyl-(1-&gt;4)-Rib-ol-P-Rib-ol-P-3-beta-D-GalNAc-(1-&gt;3)-beta-D-GlcNAc-(1-&gt;4)-O-6-P-alpha-D-Man}-L-Thr-[protein] + UDP-alpha-D-xylose = 3-O-{(1-&gt;[3)-alpha-D-Xyl-(1-&gt;3)-beta-D-GlcA-(1-&gt;](n+1)-4)-beta-D-Xyl-(1-&gt;4)-Rib-ol-P-Rib-ol-P-3-beta-D-GalNAc-(1-&gt;3)-beta-D-GlcNAc-(1-&gt;4)-O-6-P-alpha-D-Man}-L-Thr-[protein] + UDP + H(+). It participates in protein modification; protein glycosylation. Functionally, bifunctional glycosyltransferase with both alpha-1,3-xylosyltransferase and beta-1,3-glucuronyltransferase activities involved in the maturation of alpha-dystroglycan (DAG1) by glycosylation leading to DAG1 binding to laminin G-like domain-containing extracellular proteins with high affinity. Elongates the glucuronyl-beta-1,4-xylose-beta disaccharide primer structure initiated by B4GAT1 by adding repeating units [-3-Xylose-alpha-1,3-GlcA-beta-1-] to produce a heteropolysaccharide. Requires the phosphorylation of core M3 (O-mannosyl trisaccharide) by POMK to elongate the glucuronyl-beta-1,4-xylose-beta disaccharide primer. Plays a key role in skeletal muscle function and regeneration. This is Xylosyl- and glucuronyltransferase LARGE1 from Danio rerio (Zebrafish).